The chain runs to 357 residues: Chorismate synthase (357 aa).

2 residues coordinate NADP(+): R48 and R54. FMN contacts are provided by residues 125–127 (RSS), 243–244 (NA), G283, 298–302 (KPTSS), and R324.

It belongs to the chorismate synthase family. In terms of assembly, homotetramer. Requires FMNH2 as cofactor.

The catalysed reaction is 5-O-(1-carboxyvinyl)-3-phosphoshikimate = chorismate + phosphate. It participates in metabolic intermediate biosynthesis; chorismate biosynthesis; chorismate from D-erythrose 4-phosphate and phosphoenolpyruvate: step 7/7. Its function is as follows. Catalyzes the anti-1,4-elimination of the C-3 phosphate and the C-6 proR hydrogen from 5-enolpyruvylshikimate-3-phosphate (EPSP) to yield chorismate, which is the branch point compound that serves as the starting substrate for the three terminal pathways of aromatic amino acid biosynthesis. This reaction introduces a second double bond into the aromatic ring system. This Pasteurella multocida (strain Pm70) protein is Chorismate synthase.